The primary structure comprises 262 residues: Ribosome maturation factor RimP (262 aa).

The interval 197–262 (RELGVLPPPP…LGQTDPTEGD (66 aa)) is disordered. The span at 223–233 (KLPKAKLKAAK) shows a compositional bias: basic residues. Basic and acidic residues predominate over residues 240-254 (TKEHRLAAAERKRLG).

Belongs to the RimP family.

It localises to the cytoplasm. Its function is as follows. Required for maturation of 30S ribosomal subunits. This chain is Ribosome maturation factor RimP, found in Rhodopseudomonas palustris (strain BisB18).